The primary structure comprises 367 residues: Probable cysteine protease RD19D (367 aa).

The N-terminal stretch at 1–22 (MVAKALAQLITCIILFCHVVAS) is a signal peptide. A propeptide spans 23–136 (VEDLTIRQVT…AEAPMVEVDG (114 aa)) (activation peptide). A glycan (N-linked (GlcNAc...) asparagine) is linked at Asn61. 2 disulfide bridges follow: Cys158-Cys208 and Cys192-Cys241. Cys161 is an active-site residue. The N-linked (GlcNAc...) asparagine glycan is linked to Asn254. A disulfide bridge connects residues Cys297 and Cys352. Catalysis depends on residues His304 and Asn331.

The protein belongs to the peptidase C1 family.

Probable thiol protease. This chain is Probable cysteine protease RD19D, found in Arabidopsis thaliana (Mouse-ear cress).